Consider the following 204-residue polypeptide: Holliday junction branch migration complex subunit RuvA (204 aa).

The segment at 1 to 64 (MIGRLRGILL…EDAQLLYGFN (64 aa)) is domain I. Residues 65 to 143 (TVKERALFRE…GWSAGDLFTP (79 aa)) are domain II. The flexible linker stretch occupies residues 144-155 (FTDAAPVDSGST). The tract at residues 156–204 (SSNSAEEEAVSALLALGYKPVQASKVVSQIAKPDMTSEQLIREALKSMV) is domain III.

The protein belongs to the RuvA family. In terms of assembly, homotetramer. Forms an RuvA(8)-RuvB(12)-Holliday junction (HJ) complex. HJ DNA is sandwiched between 2 RuvA tetramers; dsDNA enters through RuvA and exits via RuvB. An RuvB hexamer assembles on each DNA strand where it exits the tetramer. Each RuvB hexamer is contacted by two RuvA subunits (via domain III) on 2 adjacent RuvB subunits; this complex drives branch migration. In the full resolvosome a probable DNA-RuvA(4)-RuvB(12)-RuvC(2) complex forms which resolves the HJ.

It localises to the cytoplasm. Its function is as follows. The RuvA-RuvB-RuvC complex processes Holliday junction (HJ) DNA during genetic recombination and DNA repair, while the RuvA-RuvB complex plays an important role in the rescue of blocked DNA replication forks via replication fork reversal (RFR). RuvA specifically binds to HJ cruciform DNA, conferring on it an open structure. The RuvB hexamer acts as an ATP-dependent pump, pulling dsDNA into and through the RuvAB complex. HJ branch migration allows RuvC to scan DNA until it finds its consensus sequence, where it cleaves and resolves the cruciform DNA. The protein is Holliday junction branch migration complex subunit RuvA of Vibrio vulnificus (strain CMCP6).